The primary structure comprises 183 residues: Transcription factor E (183 aa).

The HTH TFE/IIEalpha-type domain occupies 4–97; sequence YIELVRRYVY…SWSIKDEDIR (94 aa).

Belongs to the TFE family. Monomer. Interaction with RNA polymerase subunits RpoF and RpoE is necessary for Tfe stimulatory transcription activity. Able to interact with Tbp and RNA polymerase in the absence of DNA promoter. Interacts both with the preinitiation and elongation complexes.

Functionally, transcription factor that plays a role in the activation of archaeal genes transcribed by RNA polymerase. Facilitates transcription initiation by enhancing TATA-box recognition by TATA-box-binding protein (Tbp), and transcription factor B (Tfb) and RNA polymerase recruitment. Not absolutely required for transcription in vitro, but particularly important in cases where Tbp or Tfb function is not optimal. It dynamically alters the nucleic acid-binding properties of RNA polymerases by stabilizing the initiation complex and destabilizing elongation complexes. Seems to translocate with the RNA polymerase following initiation and acts by binding to the non template strand of the transcription bubble in elongation complexes. The sequence is that of Transcription factor E from Caldivirga maquilingensis (strain ATCC 700844 / DSM 13496 / JCM 10307 / IC-167).